A 282-amino-acid polypeptide reads, in one-letter code: N-acetylaspartate synthetase (282 aa).

The chain crosses the membrane as a helical span at residues 103-125 (FLTVMCYVMTKSFTLTFCAPFIL). The region spanning 110 to 269 (VMTKSFTLTF…RSPLERLFFQ (160 aa)) is the N-acetyltransferase domain.

It belongs to the NAT8 family.

The protein resides in the cytoplasm. It localises to the microsome membrane. Its subcellular location is the mitochondrion membrane. It is found in the endoplasmic reticulum membrane. It catalyses the reaction L-aspartate + acetyl-CoA = N-acetyl-L-aspartate + CoA + H(+). In terms of biological role, catalyzes the synthesis of N-acetylaspartate acid (NAA) from L-aspartate and acetyl-CoA. The sequence is that of N-acetylaspartate synthetase (nat8l) from Danio rerio (Zebrafish).